Reading from the N-terminus, the 244-residue chain is METKPVITCLKTLLIIYSFVFWITGVILLAVGVWGKLTLGTYISLIAENSTNAPYVLIGTGTTIVVFGLFGCFATCRGSPWMLKLYAMFLSLVFLAELVAGISGFVFRHEIKDTFLRTYTDAMQTYDGKDDRSQAVDHVQRSLSCCGVQNYTNWSTSPYFLEHGIPPSCCMNETDCNPQDLHNLTVAATKVNQKGCYDLVTSFMETNMGIIAGVAFGIAFSQLIGMLLACCLSRFITANQYEMV.

The Cytoplasmic segment spans residues 1 to 11 (METKPVITCLK). A helical transmembrane segment spans residues 12–35 (TLLIIYSFVFWITGVILLAVGVWG). Residues 36-51 (KLTLGTYISLIAENST) lie on the Extracellular side of the membrane. Asn-49 carries N-linked (GlcNAc...) asparagine glycosylation. Residues 52–70 (NAPYVLIGTGTTIVVFGLF) traverse the membrane as a helical segment. Residues 71–81 (GCFATCRGSPW) are Cytoplasmic-facing. A helical transmembrane segment spans residues 82-107 (MLKLYAMFLSLVFLAELVAGISGFVF). At 108–208 (RHEIKDTFLR…LVTSFMETNM (101 aa)) the chain is on the extracellular side. N-linked (GlcNAc...) asparagine glycans are attached at residues Asn-150, Asn-153, Asn-172, and Asn-183. Residues 209 to 229 (GIIAGVAFGIAFSQLIGMLLA) traverse the membrane as a helical segment. The Cytoplasmic segment spans residues 230–244 (CCLSRFITANQYEMV).

It belongs to the tetraspanin (TM4SF) family.

The protein localises to the membrane. In terms of biological role, may be involved in cell proliferation and cell motility. The chain is Tetraspanin-7 (TSPAN7) from Pongo pygmaeus (Bornean orangutan).